The following is a 167-amino-acid chain: SsrA-binding protein (167 aa).

Basic and acidic residues predominate over residues 139–158 (QNHDKRDAAKDRDWQRDKQR). A disordered region spans residues 139 to 167 (QNHDKRDAAKDRDWQRDKQRVMRRHNRDA).

The protein belongs to the SmpB family.

The protein resides in the cytoplasm. Functionally, required for rescue of stalled ribosomes mediated by trans-translation. Binds to transfer-messenger RNA (tmRNA), required for stable association of tmRNA with ribosomes. tmRNA and SmpB together mimic tRNA shape, replacing the anticodon stem-loop with SmpB. tmRNA is encoded by the ssrA gene; the 2 termini fold to resemble tRNA(Ala) and it encodes a 'tag peptide', a short internal open reading frame. During trans-translation Ala-aminoacylated tmRNA acts like a tRNA, entering the A-site of stalled ribosomes, displacing the stalled mRNA. The ribosome then switches to translate the ORF on the tmRNA; the nascent peptide is terminated with the 'tag peptide' encoded by the tmRNA and targeted for degradation. The ribosome is freed to recommence translation, which seems to be the essential function of trans-translation. The chain is SsrA-binding protein from Xanthomonas euvesicatoria pv. vesicatoria (strain 85-10) (Xanthomonas campestris pv. vesicatoria).